The primary structure comprises 421 residues: ATP-dependent RNA helicase RhlB (421 aa).

Residues 9-37 carry the Q motif motif; sequence QKFSDFALHPKVVEALEKKGFHNCTPIQA. Residues 40–219 enclose the Helicase ATP-binding domain; the sequence is LPLTLAGRDV…FEQMNNAEYI (180 aa). ATP is bound at residue 53–60; that stretch reads AQTGTGKT. The DEAD box signature appears at 165–168; it reads DEAD. The region spanning 245-390 is the Helicase C-terminal domain; the sequence is RLLQTLIEEE…VSKYNPDALM (146 aa). The disordered stretch occupies residues 392-421; sequence DLPKPLRLTRPRTGNGPRRTGAPRNRRRSG. Residues 402–414 show a composition bias toward low complexity; the sequence is PRTGNGPRRTGAP.

The protein belongs to the DEAD box helicase family. RhlB subfamily. Component of the RNA degradosome, which is a multiprotein complex involved in RNA processing and mRNA degradation.

Its subcellular location is the cytoplasm. The catalysed reaction is ATP + H2O = ADP + phosphate + H(+). DEAD-box RNA helicase involved in RNA degradation. Has RNA-dependent ATPase activity and unwinds double-stranded RNA. The polypeptide is ATP-dependent RNA helicase RhlB (Escherichia coli (strain SMS-3-5 / SECEC)).